The sequence spans 219 residues: 7-cyano-7-deazaguanine synthase (219 aa).

10 to 20 (FSGGQDSTTCL) contributes to the ATP binding site. Zn(2+) contacts are provided by Cys188, Cys197, Cys200, and Cys203.

It belongs to the QueC family. As to quaternary structure, homodimer. It depends on Zn(2+) as a cofactor.

The enzyme catalyses 7-carboxy-7-deazaguanine + NH4(+) + ATP = 7-cyano-7-deazaguanine + ADP + phosphate + H2O + H(+). The protein operates within purine metabolism; 7-cyano-7-deazaguanine biosynthesis. In terms of biological role, catalyzes the ATP-dependent conversion of 7-carboxy-7-deazaguanine (CDG) to 7-cyano-7-deazaguanine (preQ(0)). This Clostridium botulinum (strain Kyoto / Type A2) protein is 7-cyano-7-deazaguanine synthase.